The chain runs to 514 residues: Alpha-1B adrenergic receptor (514 aa).

At 1–45 (MNPDLDTGHNTSAPAHWGELKDANFTGPNQTSSNSTLPQLDVTRA) the chain is on the extracellular side. N-linked (GlcNAc...) asparagine glycans are attached at residues asparagine 10, asparagine 24, asparagine 29, and asparagine 34. A helical transmembrane segment spans residues 46–69 (ISVGCLGAFILFAIVGNILVILSV). The Cytoplasmic portion of the chain corresponds to 70 to 82 (ACNRHLRTPTNYF). The chain crosses the membrane as a helical span at residues 83-104 (IVNLAIADLLLSFTDLPFSATL). At 105-114 (EVLGYWVLGR) the chain is on the extracellular side. The helical transmembrane segment at 115–140 (IFCDIWAAVDVLCCTASILSLCAISI) threads the bilayer. Cysteine 117 and cysteine 194 form a disulfide bridge. At 141 to 160 (DRYIGVRYSLQYPTLVTRRK) the chain is on the cytoplasmic side. Residues 161–183 (AILALLSVWVLSTVISIGPLLGW) traverse the membrane as a helical segment. The Extracellular segment spans residues 184-200 (KEPAPNDDKECGVTEEP). A helical membrane pass occupies residues 201–223 (FYALFSSLGSFYIPLAVILVMYC). The Cytoplasmic segment spans residues 224 to 294 (RVYIVAKRTT…FSREKKAAKT (71 aa)). The residue at position 263 (threonine 263) is a Phosphothreonine. Residues 295-318 (LGIVVGMFILCWLPFFIALPLGSL) traverse the membrane as a helical segment. Residues 319–325 (FSTLKPP) are Extracellular-facing. The helical transmembrane segment at 326–350 (DAVFKVVFWLGYFNSCLNPIIYPCS) threads the bilayer. The Cytoplasmic segment spans residues 351-514 (SKEFKRAFMR…SNMPLAPGHF (164 aa)). Cysteine 364 carries the S-palmitoyl cysteine lipid modification. The Nuclear localization signal motif lies at 367 to 377 (RGGRRRRRRRR). Disordered stretches follow at residues 391 to 429 (GGSL…GYLG) and 473 to 514 (LGEP…PGHF). Positions 409 to 423 (SCMSGSQRTLPSASP) are enriched in polar residues.

Belongs to the G-protein coupled receptor 1 family. Adrenergic receptor subfamily. ADRA1B sub-subfamily. In terms of assembly, homo- and heterooligomer. Heterooligomerizes with ADRA1B homooligomers in cardiac myocytes. Interacts with CAVIN4.

The protein resides in the nucleus membrane. It is found in the cell membrane. The protein localises to the cytoplasm. Its subcellular location is the membrane. It localises to the caveola. In terms of biological role, this alpha-adrenergic receptor mediates its action by association with G proteins that activate a phosphatidylinositol-calcium second messenger system. Its effect is mediated by G(q) and G(11) proteins. Nuclear ADRA1A-ADRA1B heterooligomers regulate phenylephrine (PE)-stimulated ERK signaling in cardiac myocytes. This is Alpha-1B adrenergic receptor (Adra1b) from Mus musculus (Mouse).